The chain runs to 177 residues: Alkyl hydroperoxide reductase AhpD (177 aa).

C131 functions as the Proton donor in the catalytic mechanism. An intrachain disulfide couples C131 to C134. The active-site Cysteine sulfenic acid (-SOH) intermediate is C134.

This sequence belongs to the AhpD family. In terms of assembly, homotrimer.

The enzyme catalyses N(6)-[(R)-dihydrolipoyl]-L-lysyl-[lipoyl-carrier protein] + a hydroperoxide = N(6)-[(R)-lipoyl]-L-lysyl-[lipoyl-carrier protein] + an alcohol + H2O. Functionally, antioxidant protein with alkyl hydroperoxidase activity. Required for the reduction of the AhpC active site cysteine residues and for the regeneration of the AhpC enzyme activity. The sequence is that of Alkyl hydroperoxide reductase AhpD from Streptomyces griseus subsp. griseus (strain JCM 4626 / CBS 651.72 / NBRC 13350 / KCC S-0626 / ISP 5235).